A 218-amino-acid chain; its full sequence is MFSPSVYSEIIATLPPSVRLVAVTKTKAIADIEAAYGAGIRDFAESRIQEALPKIEALANYQDINWHFIGRLQSNKARKVVENFTYIHSVDNLAIAVKLDRIAEELNKFPQGLLQIKLLPDENKSGWTREELKLDLPQLELLKNLKICGLMTILPLGLSPGDRQLTFGELKNLATAINQQSSLSLTELSMGMSGDYPEAIAAGATMIRLGTILFGDRL.

Lys-25 is modified (N6-(pyridoxal phosphate)lysine).

It belongs to the pyridoxal phosphate-binding protein YggS/PROSC family.

Pyridoxal 5'-phosphate (PLP)-binding protein, which is involved in PLP homeostasis. This is Pyridoxal phosphate homeostasis protein from Synechocystis sp. (strain ATCC 27184 / PCC 6803 / Kazusa).